Consider the following 823-residue polypeptide: Zygotic DNA replication licensing factor mcm6-A (823 aa).

The segment at 159–186 adopts a C4-type zinc-finger fold; sequence CLDCQTLVRDVEQQFKYTQPSICRNPVC. The MCM domain occupies 347–554; it reads LYHNLCTSLF…TDYAIARRIV (208 aa). Residue 397–404 participates in ATP binding; the sequence is GDPSTAKS. The Arginine finger signature appears at 529–532; sequence SRFD. The interval 663-710 is disordered; the sequence is PDVNLDQDDEHEPEDETQEGTNGDAEVPNGVNGHVNGINGHSQESNAA. Residues 667 to 680 are compositionally biased toward acidic residues; sequence LDQDDEHEPEDETQ. A compositionally biased stretch (low complexity) spans 691–703; that stretch reads NGVNGHVNGINGH.

Belongs to the MCM family. In terms of assembly, component of the mcm2-7 complex (RLF-M). The complex forms a toroidal hexameric ring with the proposed subunit order mcm2-mcm6-mcm4-mcm7-mcm3-mcm5 (By simililarity). Begins to associate with zmcm3, mcm4 and mcm7 into mcm complexes at the neurula stage. May replace mmcm6 in the complex that functions during licensing of DNA replication.

It localises to the nucleus. The enzyme catalyses ATP + H2O = ADP + phosphate + H(+). Functionally, acts as a component of the mcm2-7 complex (mcm complex) which is the putative replicative helicase essential for 'once per cell cycle' DNA replication initiation and elongation in eukaryotic cells. The active ATPase sites in the mcm2-7 ring are formed through the interaction surfaces of two neighboring subunits such that a critical structure of a conserved arginine finger motif is provided in trans relative to the ATP-binding site of the Walker A box of the adjacent subunit. The six ATPase active sites, however, are likely to contribute differentially to the complex helicase activity. The existence of maternal and zygotic forms of mcm3 and mcm6 suggests that specific forms of mcm2-7 complexes may be used during different stages of development. May replace mmcm6 in the mcm2-7 complex. This Xenopus laevis (African clawed frog) protein is Zygotic DNA replication licensing factor mcm6-A (zmcm6-a).